Reading from the N-terminus, the 250-residue chain is Putative inactive flavonol synthase 2 (250 aa).

Positions 171-250 (TEYVMRINNY…EQWKVQECVA (80 aa)) constitute a Fe2OG dioxygenase domain. Residues H195 and D197 each coordinate Fe cation.

It belongs to the iron/ascorbate-dependent oxidoreductase family.

The polypeptide is Putative inactive flavonol synthase 2 (FLS2) (Arabidopsis thaliana (Mouse-ear cress)).